We begin with the raw amino-acid sequence, 153 residues long: Endoribonuclease YbeY (153 aa).

Residues His-118, His-122, and His-128 each coordinate Zn(2+).

It belongs to the endoribonuclease YbeY family. It depends on Zn(2+) as a cofactor.

The protein resides in the cytoplasm. Functionally, single strand-specific metallo-endoribonuclease involved in late-stage 70S ribosome quality control and in maturation of the 3' terminus of the 16S rRNA. The protein is Endoribonuclease YbeY of Staphylococcus saprophyticus subsp. saprophyticus (strain ATCC 15305 / DSM 20229 / NCIMB 8711 / NCTC 7292 / S-41).